A 229-amino-acid chain; its full sequence is Acetate kinase EutQ (229 aa).

The required for interaction with EutM stretch occupies residues 1–100; that stretch reads MKKLITANDI…EKVLKEKQSL (100 aa).

It belongs to the EutQ cupin-like family. In terms of assembly, homodimer. Interacts with the N-terminus of EutM; a probably cytoplasm-facing helix (EutM 'Val-49' to 'Gln-64') interacts with N-terminus of EutQ. Requires Does not need divalent cations. as cofactor.

Its subcellular location is the bacterial microcompartment. It carries out the reaction acetate + ATP = acetyl phosphate + ADP. Its pathway is amine and polyamine degradation; ethanolamine degradation. Its function is as follows. A bidirectional acetate kinase that may drive flux through the ethanolamine (EA) degradation pathway under anoxic conditions found when this bacteria infects the host intestine. It may generate ATP that can be used by other enzymes (EutA and EutT) in the eut pathway. Can use GTP instead of ATP with reduced efficiency. Might be required to correctly target EutE to bacterial microcompartments (BMC). Required for the biogenesis of multiple mobile BMCs per cell. Might serve as an assembly hub for BMC shell proteins. Expression of eutK, eutL, eutM, eutN, eutS (eutSMNLK) in E.coli leads to formation of a single BMC; coexpression of eutQ with eutSMNLK permits E.coli to make cells with more than one mobile BMC, as is usual in vivo. EutS alone also forms BMCs, but in the presence of eutQ both BMCs and protein filaments are formed. Expression of the eut operon allows this bacteria to use ethanolamine (EA) as a carbon, nitrogen and energy source. It relies on cobalamin (vitamin B12) both as a cofactor for the ethanolamine ammonia-lyase (EAL) activity and to induce the operon. EA enhances bacterial survival in macrophages in a concentration-dependent manner, suggesting it is an important nutrient during infection. This Salmonella typhimurium (strain LT2 / SGSC1412 / ATCC 700720) protein is Acetate kinase EutQ (eutQ).